We begin with the raw amino-acid sequence, 1304 residues long: DNA-directed RNA polymerase subunit beta' (1304 aa).

The segment at 1–23 (MSEKGRFSAGLSRQAADGNKADA) is disordered. Residues cysteine 241, cysteine 315, cysteine 322, and cysteine 325 each contribute to the Zn(2+) site. The segment covering 1256-1268 (AAEPEPDEEEEEP) has biased composition (acidic residues). The disordered stretch occupies residues 1256-1304 (AAEPEPDEEEEEPAVLPELPPRLILEDDQLIDDSTPAFDELEEDDDEEE). Residues 1269-1278 (AVLPELPPRL) show a composition bias toward low complexity. A compositionally biased stretch (acidic residues) spans 1294–1304 (DELEEDDDEEE).

It belongs to the RNA polymerase beta' chain family. RpoC2 subfamily. As to quaternary structure, in cyanobacteria the RNAP catalytic core is composed of 2 alpha, 1 beta, 1 beta', 1 gamma and 1 omega subunit. When a sigma factor is associated with the core the holoenzyme is formed, which can initiate transcription. Zn(2+) is required as a cofactor.

It catalyses the reaction RNA(n) + a ribonucleoside 5'-triphosphate = RNA(n+1) + diphosphate. DNA-dependent RNA polymerase catalyzes the transcription of DNA into RNA using the four ribonucleoside triphosphates as substrates. The polypeptide is DNA-directed RNA polymerase subunit beta' (Synechococcus sp. (strain JA-2-3B'a(2-13)) (Cyanobacteria bacterium Yellowstone B-Prime)).